We begin with the raw amino-acid sequence, 536 residues long: Putative beta-xylosidase (536 aa).

Residue Asp14 is the Proton acceptor of the active site. Glu186 (proton donor) is an active-site residue.

It belongs to the glycosyl hydrolase 43 family.

It catalyses the reaction Hydrolysis of (1-&gt;4)-beta-D-xylans, to remove successive D-xylose residues from the non-reducing termini.. This is Putative beta-xylosidase (yagH) from Escherichia coli (strain K12).